An 862-amino-acid chain; its full sequence is Putative PIP5K1A and PSMD4-like protein (862 aa).

Positions Thr-28–Val-396 constitute a PIPK domain. 2 disordered regions span residues Pro-404–Gly-424 and His-453–Ser-481. Positions Ser-412–Gly-424 are enriched in low complexity. The 184-residue stretch at Met-490 to Ile-673 folds into the VWFA domain. The region spanning Ser-696–Arg-715 is the UIM 1 domain. Residues Gln-716–Asp-740 form a disordered region. Residues Gln-722–Ala-731 are compositionally biased toward low complexity. The UIM 2 domain maps to Met-766–Ala-783. The tract at residues Asn-826–Lys-862 is disordered. The segment covering Lys-850–Lys-862 has biased composition (basic and acidic residues).

As to expression, testis-specific.

It is found in the cytoplasm. Functionally, has negligible PIP5 kinase activity. Binds to ubiquitinated proteins. This is Putative PIP5K1A and PSMD4-like protein (PIPSL) from Homo sapiens (Human).